Consider the following 228-residue polypeptide: Small ribosomal subunit protein uS3 (228 aa).

The KH type-2 domain occupies 39–107 (TREYLQDKLK…PVHINIEEIR (69 aa)).

The protein belongs to the universal ribosomal protein uS3 family. As to quaternary structure, part of the 30S ribosomal subunit. Forms a tight complex with proteins S10 and S14.

In terms of biological role, binds the lower part of the 30S subunit head. Binds mRNA in the 70S ribosome, positioning it for translation. The chain is Small ribosomal subunit protein uS3 from Pseudomonas entomophila (strain L48).